The following is a 538-amino-acid chain: Retinoblastoma-binding protein 5 (538 aa).

2 WD repeats span residues 22 to 63 (DCIS…KIIS) and 64 to 103 (AHIHPVCSLCWSRDGHKLVSASTDNIVSQWDVLSGDCDQR). A Glycyl lysine isopeptide (Lys-Gly) (interchain with G-Cter in SUMO2) cross-link involves residue lysine 129. 4 WD repeats span residues 148 to 188 (DDDS…LVAS), 196 to 235 (SNTTAIKSIEFARKGSCFLINTADRIIRVYDGREILTCGR), 249 to 291 (VNRT…KILH), and 293 to 331 (TRGELLLDVAWHPVRPIIASISSGVVSIWAQNQVENWSA). Residue threonine 252 is modified to Phosphothreonine; by CDK1. Residues 330-366 (SAFAPDFKELDENVEYEERESEFDIEDEDKSEPEQTG) are interaction with ASH2L. Over residues 344–360 (EYEERESEFDIEDEDKS) the composition is skewed to acidic residues. A disordered region spans residues 344-377 (EYEERESEFDIEDEDKSEPEQTGADAAEDEEVDV). At serine 350 the chain carries Phosphoserine. The interaction with WDR5 stretch occupies residues 371 to 380 (EDEEVDVTSV). A phosphoserine mark is found at serine 388 and serine 389. The tract at residues 408–538 (VEDPEENPYG…TAGGAISELL (131 aa)) is disordered. The span at 479–490 (SKKKQAGRPKGS) shows a compositional bias: basic residues. Residues 491–510 (KGKEKDSPFKPKLYKGDRGL) show a composition bias toward basic and acidic residues. The residue at position 497 (serine 497) is a Phosphoserine; by CDK1. Serine 525 carries the phosphoserine modification.

As to quaternary structure, component of the SET1 complex, at least composed of the catalytic subunit (SETD1A or SETD1B), WDR5, WDR82, RBBP5, ASH2L/ASH2, CXXC1/CFP1, HCFC1 and DPY30. Core component of several methyltransferase-containing complexes including MLL1/MLL, MLL2/3 (also named ASCOM complex) and MLL4/WBP7. Each complex is at least composed of ASH2L, RBBP5, WDR5, DPY30, one or more specific histone methyltransferases (KMT2A/MLL1, KMT2D/MLL2, KMT2C/MLL3 and KMT2B/MLL4), and the facultative components PAGR1, BACC1, CHD8, E2F6, HCFC1, HCFC2, HSP70, INO80C, KDM6A, KANSL1, LAS1L, MAX, MCRS1, MEN1, MGA, MYST1/MOF, NCOA6, PAXIP1/PTIP, PELP1, PHF20, PRP31, RING2, RUVB1/TIP49A, RUVB2/TIP49B, SENP3, TAF1, TAF4, TAF6, TAF7, TAF9, TEX10 and alpha- and beta-tubulin. Component of a histone methylation complex composed of at least ZNF335, RBBP5, ASH2L and WDR5; the complex may have histone H3-specific methyltransferase activity, however does not have specificity for 'Lys-4' of histone H3. Interacts with ZNF335. Interacts with ASH2L; the interaction is direct. Interacts with WDR5; the interaction is direct. Components of the ZNF335-RBBP5-ASH2L-WDR5 histone methylation complex may associate with components of a nuclear receptor-mediated transcription complex to form a complex at least composed of ZNF335, HCFC1, CCAR2, EMSY, MKI67, RBBP5, ASH2L and WDR5. Within this complex interacts with EMSY. Found in a complex with RBBP5, ASH2L, DPY30, KMT2A, KMT2D and WDR5. Interacts with SETD1A. Interacts with WDR82. Ubiquitously expressed.

It is found in the nucleus. In terms of biological role, in embryonic stem (ES) cells, plays a crucial role in the differentiation potential, particularly along the neural lineage, regulating gene induction and H3 'Lys-4' methylation at key developmental loci, including that mediated by retinoic acid. Does not affect ES cell self-renewal. Component or associated component of some histone methyltransferase complexes which regulates transcription through recruitment of those complexes to gene promoters. As part of the MLL1/MLL complex, involved in mono-, di- and trimethylation at 'Lys-4' of histone H3. Histone H3 'Lys-4' methylation represents a specific tag for epigenetic transcriptional activation. In association with ASH2L and WDR5, stimulates the histone methyltransferase activities of KMT2A, KMT2B, KMT2C, KMT2D, SETD1A and SETD1B. The sequence is that of Retinoblastoma-binding protein 5 (RBBP5) from Homo sapiens (Human).